A 174-amino-acid chain; its full sequence is MHCPFCQHNDTRVIDSRVSEDGTTIRRRRECEACGERFSTLETIELKLPTVVKSDGGREAFDARKLRTSFDRALQKRPVAEEQIEAAVRAVVHQLRMSGEREVGSLRVGEYVMVELRKLDHVGYVRFASVYRSFQDVADFREEIEKLERELPVGSEQLPLLEAALERAGKPGKR.

A zinc finger lies at 3–34 (CPFCQHNDTRVIDSRVSEDGTTIRRRRECEAC). The ATP-cone domain occupies 49–139 (PTVVKSDGGR…VYRSFQDVAD (91 aa)).

This sequence belongs to the NrdR family. Zn(2+) is required as a cofactor.

Negatively regulates transcription of bacterial ribonucleotide reductase nrd genes and operons by binding to NrdR-boxes. This Xanthomonas axonopodis pv. citri (strain 306) protein is Transcriptional repressor NrdR.